The sequence spans 57 residues: COP9 signalosome complex subunit 9 (57 aa).

Belongs to the CSN9 family. In terms of assembly, component of the CSN complex, probably composed of cops1, cops2, cops3, cops4, cops5, cops6, cops7, cops8 and cops9.

The protein localises to the nucleus. The protein resides in the cytoplasm. It is found in the nucleoplasm. Functionally, component of the COP9 signalosome complex (CSN), a complex involved in various cellular and developmental processes. The CSN complex is an essential regulator of the ubiquitin (Ubl) conjugation pathway by mediating the deneddylation of the cullin subunits of SCF-type E3 ligase complexes, leading to decrease the Ubl ligase activity. May play a role in cell proliferation. In Xenopus laevis (African clawed frog), this protein is COP9 signalosome complex subunit 9.